Here is a 115-residue protein sequence, read N- to C-terminus: Phosphoribosyl-ATP pyrophosphatase (115 aa).

It belongs to the PRA-PH family.

It localises to the cytoplasm. It carries out the reaction 1-(5-phospho-beta-D-ribosyl)-ATP + H2O = 1-(5-phospho-beta-D-ribosyl)-5'-AMP + diphosphate + H(+). The protein operates within amino-acid biosynthesis; L-histidine biosynthesis; L-histidine from 5-phospho-alpha-D-ribose 1-diphosphate: step 2/9. The sequence is that of Phosphoribosyl-ATP pyrophosphatase from Bordetella parapertussis (strain 12822 / ATCC BAA-587 / NCTC 13253).